The chain runs to 153 residues: Deoxyuridine 5'-triphosphate nucleotidohydrolase (153 aa).

Substrate contacts are provided by residues Arg-71–Gly-73, Asn-84, Thr-88–Asp-90, and Lys-98.

Belongs to the dUTPase family. Requires Mg(2+) as cofactor.

The enzyme catalyses dUTP + H2O = dUMP + diphosphate + H(+). It functions in the pathway pyrimidine metabolism; dUMP biosynthesis; dUMP from dCTP (dUTP route): step 2/2. In terms of biological role, this enzyme is involved in nucleotide metabolism: it produces dUMP, the immediate precursor of thymidine nucleotides and it decreases the intracellular concentration of dUTP so that uracil cannot be incorporated into DNA. The polypeptide is Deoxyuridine 5'-triphosphate nucleotidohydrolase (Wolbachia sp. subsp. Drosophila simulans (strain wRi)).